A 65-amino-acid polypeptide reads, in one-letter code: Venom protein Vn4.6 (65 aa).

A signal peptide spans 1-23; that stretch reads MSKIILAIFLIVLCGLIFVTVDA.

Post-translationally, contains 2 disulfide bonds. As to expression, expressed by the venom gland.

It is found in the secreted. Endoparasitoid venom protein that interferes with the activation of host hemolymph prophenoloxidase. May act in conjunction with other venom proteins (such as Vn50), by competitive binding to the zymogen and thereby interrupting the enzyme. The polypeptide is Venom protein Vn4.6 (Cotesia rubecula (Cabbage white butterfly parasite)).